Here is a 126-residue protein sequence, read N- to C-terminus: Holo-[acyl-carrier-protein] synthase (126 aa).

The Mg(2+) site is built by Asp9 and Glu58.

This sequence belongs to the P-Pant transferase superfamily. AcpS family. It depends on Mg(2+) as a cofactor.

The protein resides in the cytoplasm. The enzyme catalyses apo-[ACP] + CoA = holo-[ACP] + adenosine 3',5'-bisphosphate + H(+). Functionally, transfers the 4'-phosphopantetheine moiety from coenzyme A to a Ser of acyl-carrier-protein. The chain is Holo-[acyl-carrier-protein] synthase from Aliivibrio salmonicida (strain LFI1238) (Vibrio salmonicida (strain LFI1238)).